A 167-amino-acid polypeptide reads, in one-letter code: Golgin subfamily A member 7B (167 aa).

Residues cysteine 78 and cysteine 81 are each lipidated (S-palmitoyl cysteine). A disordered region spans residues 140–167; sequence RCSSGSSSSGSSSGSGSSSAGGGGAGAR. A compositionally biased stretch (low complexity) spans 142-157; sequence SSGSSSSGSSSGSGSS. The segment covering 158-167 has biased composition (gly residues); sequence SAGGGGAGAR.

The protein belongs to the ERF4 family. Palmitoylated by ZDHHC5. Palmitoylation is required for the maintenance of ZDHHC5 at the plasma membrane.

It is found in the cell membrane. The protein localises to the golgi apparatus membrane. Its function is as follows. Play a role in cell adhesion by regulating the plasma membrane localization of the palmitoyltransferase ZDHHC5. May be involved in protein transport from Golgi to cell surface. This chain is Golgin subfamily A member 7B (GOLGA7B), found in Mus musculus (Mouse).